The chain runs to 259 residues: Snake venom serine protease homolog rhinocerase 3 (259 aa).

Positions 1–17 are cleaved as a signal peptide; that stretch reads VLIRVLANLLLLQLSYA. The propeptide occupies 18-23; that stretch reads QESSEL. The Peptidase S1 domain occupies 24 to 250; the sequence is VIGGDECDIN…YTDWIEGIIA (227 aa). 6 cysteine pairs are disulfide-bonded: C30–C164, C51–C67, C99–C257, C143–C211, C175–C190, and C201–C226. N-linked (GlcNAc...) asparagine glycosylation occurs at N80. An N-linked (GlcNAc...) asparagine glycan is attached at N252.

Belongs to the peptidase S1 family. Snake venom subfamily. In terms of tissue distribution, expressed by the venom gland.

Its subcellular location is the secreted. Snake venom serine protease homolog that may act in the hemostasis system of the prey. The protein is Snake venom serine protease homolog rhinocerase 3 of Bitis rhinoceros (West African gaboon viper).